The following is a 171-amino-acid chain: Replication restart protein PriC (171 aa).

It belongs to the PriC family. As to quaternary structure, monomer. Component of the replication restart primosome, which is composed of PriA, PriB, PriC, DnaBe and DnaT; DnaG primase associates transiently with this complex. Interacts with the C-terminus of SSB. SSB interaction is required to load the main replicative helicase onto substrate replication forks. Interacts with helicase DnaB alone and in the DnaB-DnaC complex, probably 1:1 binding with DnaB.

Functionally, involved in the restart of stalled replication forks, which reloads the DnaB replicative helicase on sites other than the origin of replication. In vitro can load (E.coli) DnaB replicative helicase from a DnaB-DnaC complex on a single-stranded DNA (ssDNA)-binding protein (SSB)-coated stalled replication fork with no leading- or lagging-strand in the absence of other primosome proteins (PriA, PriB or DnaT). Binds SSB (tested with E.coli protein) and ssDNA. Complements priC in an E.coli priB-priC double deletion. The polypeptide is Replication restart protein PriC (Cronobacter sakazakii (strain ATCC BAA-894) (Enterobacter sakazakii)).